We begin with the raw amino-acid sequence, 1067 residues long: FHIP family protein GL19323 (1067 aa).

Polar residues predominate over residues 1-11 (MSWLRSSPLRQ). 3 disordered regions span residues 1-31 (MSWLRSSPLRQSGNGGGGGVSTGHSSTGSLR), 503-525 (LARPKSVHEQQPPSGATGEQPIQ), and 832-1013 (NENS…SEPA). 2 positions are modified to phosphoserine: S508 and S835. A compositionally biased stretch (low complexity) spans 842–858 (QPQTTLSQQQQQQQGQQ). The span at 859–878 (RSAYATLSAATPVQATQTSA) shows a compositional bias: polar residues. Over residues 893-904 (SKSISSMFSRRS) the composition is skewed to low complexity. Over residues 918–949 (LVGNNNSGSGQSQPFSSTGTGTCETSLSTNPQ) the composition is skewed to polar residues. A compositionally biased stretch (low complexity) spans 950–979 (SGAAAARSTGTATTANGNSSNSNISIGGST). The segment covering 980 to 996 (QTLSGHSNTTTYSSSTL) has biased composition (polar residues).

The protein belongs to the FHIP family.

This chain is FHIP family protein GL19323, found in Drosophila persimilis (Fruit fly).